The chain runs to 89 residues: Small ribosomal subunit protein uS15 (89 aa).

Belongs to the universal ribosomal protein uS15 family. In terms of assembly, part of the 30S ribosomal subunit. Forms a bridge to the 50S subunit in the 70S ribosome, contacting the 23S rRNA.

In terms of biological role, one of the primary rRNA binding proteins, it binds directly to 16S rRNA where it helps nucleate assembly of the platform of the 30S subunit by binding and bridging several RNA helices of the 16S rRNA. Functionally, forms an intersubunit bridge (bridge B4) with the 23S rRNA of the 50S subunit in the ribosome. This chain is Small ribosomal subunit protein uS15, found in Desulforapulum autotrophicum (strain ATCC 43914 / DSM 3382 / VKM B-1955 / HRM2) (Desulfobacterium autotrophicum).